We begin with the raw amino-acid sequence, 1226 residues long: Chitin synthase IV (1226 aa).

Positions 1–205 are disordered; it reads MSLPERPGGS…SRKNPATAEQ (205 aa). The span at 49–65 shows a compositional bias: polar residues; that stretch reads SVSSYAETISNPHANTE. Positions 66–75 are enriched in low complexity; the sequence is TLPLSPTHPT. The span at 94 to 107 shows a compositional bias: basic and acidic residues; it reads IRPERNRIDKDHRN. Over residues 134-151 the composition is skewed to polar residues; the sequence is DVSTEPSGGSQTHGSFAD. The segment covering 163–172 has biased composition (basic and acidic residues); sequence MSGDDQEKGN. Over residues 173 to 198 the composition is skewed to basic residues; it reads TRVKSRPRRSKSGKITKETRHRKSRK. The helical transmembrane segment at 246-266 threads the bilayer; the sequence is MGLISIILVIMAIVGFLTFGF. Asparagine 381, asparagine 421, and asparagine 443 each carry an N-linked (GlcNAc...) asparagine glycan. The helical transmembrane segment at 516 to 536 threads the bilayer; the sequence is ILILSVVGTRFVLALIFQWFI. The segment at 572–671 is disordered; that stretch reads LPGDVGSSAM…PGPAGFIHDS (100 aa). Polar residues-rich tracts occupy residues 580–601 and 618–643; these read AMGS…TSRF and TTMS…NDSR. N-linked (GlcNAc...) asparagine glycosylation is present at asparagine 640. Over residues 649–666 the composition is skewed to low complexity; the sequence is PDPYSSAASPSDGPGPAG. N-linked (GlcNAc...) asparagine glycosylation is found at asparagine 787 and asparagine 1035. 3 helical membrane-spanning segments follow: residues 1060 to 1080, 1094 to 1114, and 1118 to 1138; these read FVVF…AFTF, IIPL…ILVT, and WSYV…NFVL.

Belongs to the chitin synthase family. Class IV subfamily. Highly expressed in conidia.

It is found in the cell membrane. It catalyses the reaction [(1-&gt;4)-N-acetyl-beta-D-glucosaminyl](n) + UDP-N-acetyl-alpha-D-glucosamine = [(1-&gt;4)-N-acetyl-beta-D-glucosaminyl](n+1) + UDP + H(+). Its function is as follows. Polymerizes chitin, a structural polymer of the cell wall and septum, by transferring the sugar moiety of UDP-GlcNAc to the non-reducing end of the growing chitin polymer. Contributes to the production of conidia and the ability of fungal conidia to germinate. Involved in fungal stress tolerances. The protein is Chitin synthase IV of Metarhizium acridum (strain CQMa 102).